Here is an 837-residue protein sequence, read N- to C-terminus: Outer membrane usher protein HifC (837 aa).

Residues 1–26 (MKTKIFPLNKIAFACSLLLANPLAWA) form the signal peptide. Cys813 and Cys833 are oxidised to a cystine.

This sequence belongs to the fimbrial export usher family.

It is found in the cell outer membrane. Essential for piliation. The polypeptide is Outer membrane usher protein HifC (hifC) (Haemophilus influenzae).